The primary structure comprises 250 residues: GTP cyclohydrolase 1 (250 aa).

2 stretches are compositionally biased toward basic and acidic residues: residues 1-14 (MEKG…EKPR) and 35-44 (PAEKPPRPEA). The tract at residues 1–64 (MEKGPVRAPA…GERPRSEEDN (64 aa)) is disordered. Ser60 and Ser81 each carry phosphoserine. 3 residues coordinate Zn(2+): Cys141, His144, and Cys212.

Belongs to the GTP cyclohydrolase I family. As to quaternary structure, toroid-shaped homodecamer, composed of a dimer of pentamers. The inactive isoforms also form decamers and may possibly be incorporated into GCH1 heterodecamers, decreasing enzyme stability and activity. Interacts with AHSA1 and GCHFR/GFRP. Phosphorylated by casein kinase II at Ser-81 in HAECs during oscillatory shear stress; phosphorylation at Ser-81 results in increased enzyme activity. In epidermis, expressed predominantly in basal undifferentiated keratinocytes and in some but not all melanocytes (at protein level).

It is found in the cytoplasm. Its subcellular location is the nucleus. The enzyme catalyses GTP + H2O = 7,8-dihydroneopterin 3'-triphosphate + formate + H(+). It functions in the pathway cofactor biosynthesis; 7,8-dihydroneopterin triphosphate biosynthesis; 7,8-dihydroneopterin triphosphate from GTP: step 1/1. Its activity is regulated as follows. GTP shows a positive allosteric effect, and tetrahydrobiopterin inhibits the enzyme activity. Zinc is required for catalytic activity. Inhibited by Mg(2+). In terms of biological role, positively regulates nitric oxide synthesis in umbilical vein endothelial cells (HUVECs). May be involved in dopamine synthesis. May modify pain sensitivity and persistence. Isoform GCH-1 is the functional enzyme, the potential function of the enzymatically inactive isoforms remains unknown. The sequence is that of GTP cyclohydrolase 1 (GCH1) from Homo sapiens (Human).